Reading from the N-terminus, the 368-residue chain is Phospho-N-acetylmuramoyl-pentapeptide-transferase (368 aa).

The next 10 membrane-spanning stretches (helical) occupy residues 32-52, 79-99, 102-122, 140-160, 176-196, 207-227, 247-267, 271-291, 296-316, and 345-365; these read TGGA…WIID, TPTM…VLWA, LNPY…IGFY, TRLL…IRLG, VVVD…VGAG, GLAI…AYLA, LAVL…FNAP, IFMG…IAVA, IVLA…IVQV, and QIVI…LSTL.

This sequence belongs to the glycosyltransferase 4 family. MraY subfamily. The cofactor is Mg(2+).

Its subcellular location is the cell inner membrane. The enzyme catalyses UDP-N-acetyl-alpha-D-muramoyl-L-alanyl-gamma-D-glutamyl-meso-2,6-diaminopimeloyl-D-alanyl-D-alanine + di-trans,octa-cis-undecaprenyl phosphate = di-trans,octa-cis-undecaprenyl diphospho-N-acetyl-alpha-D-muramoyl-L-alanyl-D-glutamyl-meso-2,6-diaminopimeloyl-D-alanyl-D-alanine + UMP. Its pathway is cell wall biogenesis; peptidoglycan biosynthesis. In terms of biological role, catalyzes the initial step of the lipid cycle reactions in the biosynthesis of the cell wall peptidoglycan: transfers peptidoglycan precursor phospho-MurNAc-pentapeptide from UDP-MurNAc-pentapeptide onto the lipid carrier undecaprenyl phosphate, yielding undecaprenyl-pyrophosphoryl-MurNAc-pentapeptide, known as lipid I. This is Phospho-N-acetylmuramoyl-pentapeptide-transferase from Nitrobacter hamburgensis (strain DSM 10229 / NCIMB 13809 / X14).